The primary structure comprises 146 residues: 6-carboxy-5,6,7,8-tetrahydropterin synthase (146 aa).

Zn(2+) is bound at residue His-27. Cys-37 acts as the Proton acceptor in catalysis. 2 residues coordinate Zn(2+): His-41 and His-43. Active-site charge relay system residues include His-78 and Glu-129.

This sequence belongs to the PTPS family. QueD subfamily. Homotetramer. Zn(2+) is required as a cofactor.

It catalyses the reaction 7,8-dihydroneopterin 3'-triphosphate + H2O = 6-carboxy-5,6,7,8-tetrahydropterin + triphosphate + acetaldehyde + 2 H(+). It functions in the pathway purine metabolism; 7-cyano-7-deazaguanine biosynthesis. Its function is as follows. Catalyzes the conversion of 7,8-dihydroneopterin triphosphate (H2NTP) to 6-carboxy-5,6,7,8-tetrahydropterin (CPH4) and acetaldehyde. The sequence is that of 6-carboxy-5,6,7,8-tetrahydropterin synthase (queD) from Bacillus subtilis (strain 168).